The sequence spans 340 residues: Protein jhp_1168 (340 aa).

Seems to interact with H.pylori HolB.

In terms of biological role, could be the functional equivalent of DNA polymerase III delta subunit (HolA). The polypeptide is Protein jhp_1168 (Helicobacter pylori (strain J99 / ATCC 700824) (Campylobacter pylori J99)).